We begin with the raw amino-acid sequence, 617 residues long: MPKYRSFTTINGKNMAGARALWRATGVKDADFGKPIIAVVNSFTEFVPGHIHLRELGQLVSKEIEKSGGIAKEFNTIAIDDGIAMGHSGMLYSLPSRELIADSIEYMIQAHCVDAMVCISNCDKITPGMLLAALRLNIPSVFVSGGPMESGKILVNEKIIKIDLVDAMMHGANKNTSNKKLLNIEKSACPTCGSCSGMFTANSMNCLTEVLGLSFPGNGSLLATHIDRKNLFLKAGKIIVRNTKNYYENNDSSLLPRSIVTKENLKNAIILDISMGGSSNTVLHLLAMAYEANINFKMIDIDLLSRKVPHLCKISPSSSKYYMEDFHRAGGVFGILSELNKINLLNTSILNILRMSLEKTINKFDILKTKDKKIISFYSSGPGNKKTIYPFSQSFRWKKLDKDRISGCIRSKKYAYSKDGGLAVLTGNLAKNGSIIKTAAITNQSSKIFSGPAKVYESQEDAVYAILNNYIKSGDIIVIRYEGPKGGPGMQEMLYPTTYLKSMGLDKKCALITDGRFSGGTSGISIGHISPEAANKGLIALVYDNDIININIIDRSLKLKISSDEIRKRKEKEENRGIFAYTPKKRLRKISDSLKIYSMFATSADKGAVRNIHKINF.

Asp-81 provides a ligand contact to Mg(2+). A [2Fe-2S] cluster-binding site is contributed by Cys-122. Positions 123 and 124 each coordinate Mg(2+). Position 124 is an N6-carboxylysine (Lys-124). Cys-195 is a [2Fe-2S] cluster binding site. Glu-492 contributes to the Mg(2+) binding site. Residue Ser-518 is the Proton acceptor of the active site.

Belongs to the IlvD/Edd family. In terms of assembly, homodimer. Requires [2Fe-2S] cluster as cofactor. The cofactor is Mg(2+).

The catalysed reaction is (2R)-2,3-dihydroxy-3-methylbutanoate = 3-methyl-2-oxobutanoate + H2O. It catalyses the reaction (2R,3R)-2,3-dihydroxy-3-methylpentanoate = (S)-3-methyl-2-oxopentanoate + H2O. Its pathway is amino-acid biosynthesis; L-isoleucine biosynthesis; L-isoleucine from 2-oxobutanoate: step 3/4. The protein operates within amino-acid biosynthesis; L-valine biosynthesis; L-valine from pyruvate: step 3/4. Functionally, functions in the biosynthesis of branched-chain amino acids. Catalyzes the dehydration of (2R,3R)-2,3-dihydroxy-3-methylpentanoate (2,3-dihydroxy-3-methylvalerate) into 2-oxo-3-methylpentanoate (2-oxo-3-methylvalerate) and of (2R)-2,3-dihydroxy-3-methylbutanoate (2,3-dihydroxyisovalerate) into 2-oxo-3-methylbutanoate (2-oxoisovalerate), the penultimate precursor to L-isoleucine and L-valine, respectively. In Buchnera aphidicola subsp. Cinara cedri (strain Cc), this protein is Dihydroxy-acid dehydratase.